A 39-amino-acid polypeptide reads, in one-letter code: Large ribosomal subunit protein bL12 (39 aa).

This sequence belongs to the bacterial ribosomal protein bL12 family. Homodimer. Part of the ribosomal stalk of the 50S ribosomal subunit. Forms a multimeric L10(L12)X complex, where L10 forms an elongated spine to which 2 to 4 L12 dimers bind in a sequential fashion. Binds GTP-bound translation factors.

Forms part of the ribosomal stalk which helps the ribosome interact with GTP-bound translation factors. Is thus essential for accurate translation. This is Large ribosomal subunit protein bL12 (rplL) from Arthrobacter glacialis.